Reading from the N-terminus, the 129-residue chain is Large ribosomal subunit protein uL22 (129 aa).

Belongs to the universal ribosomal protein uL22 family. In terms of assembly, part of the 50S ribosomal subunit.

This protein binds specifically to 23S rRNA; its binding is stimulated by other ribosomal proteins, e.g. L4, L17, and L20. It is important during the early stages of 50S assembly. It makes multiple contacts with different domains of the 23S rRNA in the assembled 50S subunit and ribosome. Functionally, the globular domain of the protein is located near the polypeptide exit tunnel on the outside of the subunit, while an extended beta-hairpin is found that lines the wall of the exit tunnel in the center of the 70S ribosome. In Brucella abortus (strain 2308), this protein is Large ribosomal subunit protein uL22.